The sequence spans 1103 residues: Voltage-dependent calcium channel subunit alpha-2/delta-1 (1103 aa).

The N-terminal stretch at 1 to 24 is a signal peptide; it reads MAAGCLLALTLTLFQSGLIGPSSE. Topologically, residues 25–1073 are extracellular; that stretch reads EPFPSPVTIK…VLEDYTDCGG (1049 aa). N-linked (GlcNAc...) asparagine glycosylation occurs at Asn-92. Position 119 is a phosphoserine (Ser-119). N-linked (GlcNAc...) asparagine glycosylation is found at Asn-136 and Asn-184. The region spanning 253–430 is the VWFA domain; it reads DMLILVDVSG…INTQEYLDVL (178 aa). 3 residues coordinate a divalent metal cation: Asp-259, Ser-261, and Ser-263. Residues 259-263 carry the MIDAS-like motif motif; that stretch reads DVSGS. N-linked (GlcNAc...) asparagine glycosylation is found at Asn-324 and Asn-348. A disulfide bridge connects residues Cys-404 and Cys-1059. In terms of domain architecture, Cache spans 446-537; it reads WTNVYLDALE…QPKPIGVGIP (92 aa). 3 N-linked (GlcNAc...) asparagine glycosylation sites follow: Asn-613, Asn-781, and Asn-888. A helical transmembrane segment spans residues 1074 to 1094; the sequence is VSGLNPSLWSIFGLQFILLWL. Over 1095–1103 the chain is Cytoplasmic; it reads VSGSRHYLL.

Belongs to the calcium channel subunit alpha-2/delta family. As to quaternary structure, dimer formed of alpha-2-1 and delta-1 chains; disulfide-linked. Voltage-dependent calcium channels are multisubunit complexes, consisting of alpha-1 (CACNA1), alpha-2 (CACNA2D), beta (CACNB) and delta (CACNA2D) subunits in a 1:1:1:1 ratio. In terms of processing, proteolytically processed into subunits alpha-2-1 and delta-1 that are disulfide-linked. Isoform 2A is expressed in skeletal muscle and aorta. Isoform 2B is expressed in brain. Isoform 2C is expressed in heart. Isoform 2D is expressed in heart and smooth muscle. Isoform 2E is expressed in smooth muscle. All five isoforms are expressed in the cardiovascular system.

It is found in the membrane. It localises to the cell membrane. In terms of biological role, the alpha-2/delta subunit of voltage-dependent calcium channels regulates calcium current density and activation/inactivation kinetics of the calcium channel. Plays an important role in excitation-contraction coupling. This chain is Voltage-dependent calcium channel subunit alpha-2/delta-1 (Cacna2d1), found in Mus musculus (Mouse).